The sequence spans 406 residues: Protein IWS1 homolog 2 (406 aa).

Disordered stretches follow at residues 1 to 28 and 41 to 89; these read MQELDSSNDEWVKELEGENEESKFTGRR and DEVE…SEEV. Residues 10 to 24 are compositionally biased toward basic and acidic residues; the sequence is EWVKELEGENEESKF. Residues 41–56 show a composition bias toward acidic residues; the sequence is DEVEEDLDDFTEPADD. Over residues 69–78 the composition is skewed to basic and acidic residues; sequence KKDESGLEKT. The region spanning 201–284 is the TFIIS N-terminal domain; that stretch reads NLLKNWLEPL…NKWGRIIYNK (84 aa).

Belongs to the IWS1 family.

The protein resides in the nucleus. Functionally, transcription factor involved in RNA polymerase II (RNAPII) transcription regulation. Involved in transcription elongation. May function at post-recruitment and elongation steps of transcription. This Arabidopsis thaliana (Mouse-ear cress) protein is Protein IWS1 homolog 2.